The primary structure comprises 283 residues: Acyl-coenzyme A diphosphatase FITM2 (283 aa).

The segment covering 1-11 (MSTRRSSTRAD) has biased composition (low complexity). The interval 1-21 (MSTRRSSTRADSTTKRPASPN) is disordered. At 1–39 (MSTRRSSTRADSTTKRPASPNSTPNAALGIFVAIARQIL) the chain is on the cytoplasmic side. A helical membrane pass occupies residues 40–60 (FIDARKVALFYLAFVTVLSFI). The Lumenal portion of the chain corresponds to 61-81 (ESRIELDSTYYLVQKHSVLNQ). The chain crosses the membrane as a helical span at residues 82–102 (YGVKMGWFWTLVIVGPFIWFS). The Cytoplasmic portion of the chain corresponds to 103–120 (SKAHNRRDRDQPIVDVCR). The chain crosses the membrane as a helical span at residues 121–141 (LGVGTACWYFSVQFFHKVLAL). The Lumenal segment spans residues 142 to 168 (TSMCDKGRTLTRAQCSEKEGVWTPGYD). A helical transmembrane segment spans residues 169-189 (ISGHCFLMIYSILIITEEAIA). The active site involves His172. The Cytoplasmic segment spans residues 190 to 219 (YRHYQQVTDAVHQMDGDREEHDRLTRCIQY). A run of 2 helical transmembrane segments spans residues 220-240 (FFVA…ISVL) and 241-261 (YYHI…CWFV). The active site involves His243. Topologically, residues 262 to 283 (TYRMLYPAGFLASPIRRTVGRK) are cytoplasmic.

It belongs to the FIT family. FIT2 subfamily.

Its subcellular location is the endoplasmic reticulum membrane. It catalyses the reaction an acyl-CoA + H2O = an acyl-4'-phosphopantetheine + adenosine 3',5'-bisphosphate + 2 H(+). In terms of biological role, fatty acyl-coenzyme A (CoA) diphosphatase that hydrolyzes fatty acyl-CoA to yield acyl-4'-phosphopantetheine and adenosine 3',5'-bisphosphate. Preferentially hydrolyzes unsaturated long-chain acyl-CoA substrates in the endoplasmic reticulum (ER) lumen. This catalytic activity is required for maintaining ER structure and for lipid droplets (LDs) biogenesis, which are lipid storage organelles involved in maintaining lipid and energy homeostasis. May directly bind to diacylglycerol (DAGs) and triacylglycerol, which is also important for LD biogenesis. May support directional budding of nacent LDs from the ER into the cytosol by reducing DAG levels at sites of LD formation. May play a role in the regulation of cell morphology, ER morphology and cytoskeletal organization. The chain is Acyl-coenzyme A diphosphatase FITM2 from Caenorhabditis elegans.